A 382-amino-acid chain; its full sequence is Lipoyl synthase, mitochondrial (382 aa).

The N-terminal 30 residues, 1-30, are a transit peptide targeting the mitochondrion; it reads MHGRRHLAASLARALTYAPSRSISSTPSLL. Polar residues predominate over residues 25–34; the sequence is STPSLLQTLD. The interval 25–47 is disordered; it reads STPSLLQTLDPSTPSPAAAPPTA. Residues Cys112, Cys117, Cys123, Cys143, Cys147, Cys150, and Ser359 each coordinate [4Fe-4S] cluster. The region spanning 128-348 is the Radical SAM core domain; that stretch reads ETGTATATIM…RSLGVDMGFR (221 aa).

Belongs to the radical SAM superfamily. Lipoyl synthase family. [4Fe-4S] cluster serves as cofactor.

Its subcellular location is the mitochondrion. The catalysed reaction is [[Fe-S] cluster scaffold protein carrying a second [4Fe-4S](2+) cluster] + N(6)-octanoyl-L-lysyl-[protein] + 2 oxidized [2Fe-2S]-[ferredoxin] + 2 S-adenosyl-L-methionine + 4 H(+) = [[Fe-S] cluster scaffold protein] + N(6)-[(R)-dihydrolipoyl]-L-lysyl-[protein] + 4 Fe(3+) + 2 hydrogen sulfide + 2 5'-deoxyadenosine + 2 L-methionine + 2 reduced [2Fe-2S]-[ferredoxin]. It participates in protein modification; protein lipoylation via endogenous pathway; protein N(6)-(lipoyl)lysine from octanoyl-[acyl-carrier-protein]: step 2/2. Its function is as follows. Catalyzes the radical-mediated insertion of two sulfur atoms into the C-6 and C-8 positions of the octanoyl moiety bound to the lipoyl domains of lipoate-dependent enzymes, thereby converting the octanoylated domains into lipoylated derivatives. This Oryza sativa subsp. indica (Rice) protein is Lipoyl synthase, mitochondrial.